A 210-amino-acid chain; its full sequence is Neuroendocrine protein 7B2 (210 aa).

A signal peptide spans Met-1–Ala-24. Cysteines 118 and 128 form a disulfide. Phosphoserine occurs at positions 139 and 203.

Belongs to the 7B2 family. In terms of assembly, interacts with PCSK2/PC2 early in the secretory pathway. Dissociation occurs at later stages. In terms of processing, proteolytically cleaved in the Golgi by a furin-like convertase to generate bioactive peptides. Sulfated on tyrosine residues.

It is found in the secreted. In terms of biological role, acts as a molecular chaperone for PCSK2/PC2, preventing its premature activation in the regulated secretory pathway. Binds to inactive PCSK2 in the endoplasmic reticulum and facilitates its transport from there to later compartments of the secretory pathway where it is proteolytically matured and activated. Also required for cleavage of PCSK2 but does not appear to be involved in its folding. Plays a role in regulating pituitary hormone secretion. The C-terminal peptide inhibits PCSK2 in vitro. In Rattus norvegicus (Rat), this protein is Neuroendocrine protein 7B2 (Scg5).